Here is a 254-residue protein sequence, read N- to C-terminus: Imidazole glycerol phosphate synthase subunit HisF (254 aa).

Active-site residues include Asp-12 and Asp-131.

It belongs to the HisA/HisF family. As to quaternary structure, heterodimer of HisH and HisF.

The protein localises to the cytoplasm. The catalysed reaction is 5-[(5-phospho-1-deoxy-D-ribulos-1-ylimino)methylamino]-1-(5-phospho-beta-D-ribosyl)imidazole-4-carboxamide + L-glutamine = D-erythro-1-(imidazol-4-yl)glycerol 3-phosphate + 5-amino-1-(5-phospho-beta-D-ribosyl)imidazole-4-carboxamide + L-glutamate + H(+). Its pathway is amino-acid biosynthesis; L-histidine biosynthesis; L-histidine from 5-phospho-alpha-D-ribose 1-diphosphate: step 5/9. IGPS catalyzes the conversion of PRFAR and glutamine to IGP, AICAR and glutamate. The HisF subunit catalyzes the cyclization activity that produces IGP and AICAR from PRFAR using the ammonia provided by the HisH subunit. The protein is Imidazole glycerol phosphate synthase subunit HisF of Desulfitobacterium hafniense (strain Y51).